Consider the following 815-residue polypeptide: Serotype-specific mannosyltransferase WbdA (815 aa).

The segment at 1–374 (MSRAIIENAG…WANTAHLAIE (374 aa)) is alpha-(1-&gt;2)-mannosyltransferase. Residues 431 to 804 (KLLVDISVLA…WKQSAEFLLK (374 aa)) are alpha-(1-&gt;3)-mannosyltransferase.

This sequence belongs to the glycosyltransferase group 1 family. Glycosyltransferase 4 subfamily. In terms of assembly, monomer. Interacts with the C-terminal region of WbdD.

Its subcellular location is the cell inner membrane. It catalyses the reaction [alpha-D-Man-(1-&gt;3)-alpha-D-Man-(1-&gt;3)-alpha-D-Man-(1-&gt;2)-alpha-D-Man-(1-&gt;2)](n)-alpha-D-Man-(1-&gt;3)-alpha-D-Man-(1-&gt;3)-alpha-D-Man-(1-&gt;3)-alpha-D-GlcNAc-di-trans,octa-cis-undecaprenyl diphosphate + 2 GDP-alpha-D-mannose = alpha-D-Man-(1-&gt;2)-alpha-D-Man-(1-&gt;2)-[alpha-D-Man-(1-&gt;3)-alpha-D-Man-(1-&gt;3)-alpha-D-Man-(1-&gt;2)-alpha-D-Man-(1-&gt;2)](n)-alpha-D-Man-(1-&gt;3)-alpha-D-Man-(1-&gt;3)-alpha-D-Man-(1-&gt;3)-alpha-D-GlcNAc-di-trans,octa-cis-undecaprenyl diphosphate + 2 GDP + 2 H(+). It carries out the reaction alpha-D-Man-(1-&gt;2)-alpha-D-Man-(1-&gt;2)-[alpha-D-Man-(1-&gt;3)-alpha-D-Man-(1-&gt;3)-alpha-D-Man-(1-&gt;2)-alpha-D-Man-(1-&gt;2)](n)-alpha-D-Man-(1-&gt;3)-alpha-D-Man-(1-&gt;3)-alpha-D-Man-(1-&gt;3)-alpha-D-GlcNAc-di-trans,octa-cis-undecaprenyl diphosphate + 2 GDP-alpha-D-mannose = [alpha-D-Man-(1-&gt;3)-alpha-D-Man-(1-&gt;3)-alpha-D-Man-(1-&gt;2)-alpha-D-Man-(1-&gt;2)](n+1)-alpha-D-Man-(1-&gt;3)-alpha-D-Man-(1-&gt;3)-alpha-D-Man-(1-&gt;3)-alpha-D-GlcNAc-di-trans,octa-cis-undecaprenyl diphosphate + 2 GDP + 2 H(+). The protein operates within bacterial outer membrane biogenesis; LPS O-antigen biosynthesis. In terms of biological role, mannosyltransferase involved in the biosynthesis of the repeat unit of the lipopolysaccharide (LPS) O-antigen region. Catalyzes the polymerization of a tetrasaccharide repeat unit containing two alpha-(1-&gt;3)- and two alpha-(1-&gt;2)-linked mannopyranose residues. The protein is Serotype-specific mannosyltransferase WbdA of Escherichia coli.